The primary structure comprises 387 residues: MKFVDEAIIRVEAGNGGSGCVSFRREKYVPDGGPDGGDGGDGGSVYLQADENLNTLITYQFERFHIAERGKNGRGRDCTGHGGEDLILKVPVGTRAIDNDTEESLGDLTTHGQKLLVAKGGFHGLGNTRFKSSTNRAPRQKTLGTDGEVRSLKLELLLLADVGLLGMPNAGKSTFIRSVSKAKPKVADYPFTTLVPNLGVVNPRPGQSFVIADIPGLIEGAADGAGLGVQFLKHLERCRVLLHILDVEPIDGSDPVEAARAIVAELEKHSPKLAGKPRWLVINKADLMLPEELQERIDRIVKELEWEGDIYTISAYNREGTAELALKLLDFIDSLPPEEEVDADAEVEFKWDNYHQNANDSINEDFNDDFDDDFDEDDYDVEIIYQR.

Positions 1–159 constitute an Obg domain; that stretch reads MKFVDEAIIR…RSLKLELLLL (159 aa). The OBG-type G domain occupies 160–333; the sequence is ADVGLLGMPN…LALKLLDFID (174 aa). Residues 166–173, 191–195, 213–216, 283–286, and 314–316 contribute to the GTP site; these read GMPNAGKS, FTTLV, DIPG, NKAD, and SAY. Mg(2+) is bound by residues S173 and T193.

Belongs to the TRAFAC class OBG-HflX-like GTPase superfamily. OBG GTPase family. In terms of assembly, monomer. Mg(2+) is required as a cofactor.

It is found in the cytoplasm. Its function is as follows. An essential GTPase which binds GTP, GDP and possibly (p)ppGpp with moderate affinity, with high nucleotide exchange rates and a fairly low GTP hydrolysis rate. Plays a role in control of the cell cycle, stress response, ribosome biogenesis and in those bacteria that undergo differentiation, in morphogenesis control. The chain is GTPase Obg from Shewanella pealeana (strain ATCC 700345 / ANG-SQ1).